The chain runs to 274 residues: Homeobox-leucine zipper protein HAT9 (274 aa).

The span at 64 to 74 shows a compositional bias: low complexity; it reads SSHSGVSSFSS. The disordered stretch occupies residues 64–96; that stretch reads SSHSGVSSFSSGRVVKRERDGGEESPEEEEMTE. Positions 110 to 169 form a DNA-binding region, homeobox; sequence SARKKLRLTKQQSALLEESFKDHSTLNPKQKQVLARQLNLRPRQVEVWFQNRRARTKLKQ. The interval 177 to 198 is leucine-zipper; that stretch reads LKKCCETLADENIRLQKEIQEL.

The protein belongs to the HD-ZIP homeobox family. Class II subfamily.

It is found in the nucleus. In terms of biological role, probable transcription factor. This chain is Homeobox-leucine zipper protein HAT9 (HAT9), found in Arabidopsis thaliana (Mouse-ear cress).